We begin with the raw amino-acid sequence, 112 residues long: Nucleoid-associated protein lpp2803 (112 aa).

Belongs to the YbaB/EbfC family. As to quaternary structure, homodimer.

It is found in the cytoplasm. Its subcellular location is the nucleoid. Functionally, binds to DNA and alters its conformation. May be involved in regulation of gene expression, nucleoid organization and DNA protection. The protein is Nucleoid-associated protein lpp2803 of Legionella pneumophila (strain Paris).